We begin with the raw amino-acid sequence, 485 residues long: Podocalyxin (485 aa).

The first 24 residues, 1–24, serve as a signal peptide directing secretion; the sequence is MRPTLALSALLLLQLLLLSTPSLS. The tract at residues 22–267 is disordered; it reads SLSQDNGNKT…STPSSTWTSG (246 aa). At 25 to 386 the chain is on the extracellular side; sequence QDNGNKTDTS…PPEVNEDRFS (362 aa). A compositionally biased stretch (polar residues) spans 26–57; sequence DNGNKTDTSDITSIDQNQDKPATNQPSNATPK. N-linked (GlcNAc...) asparagine glycans are attached at residues N29 and N82. The span at 58–109 shows a compositional bias: low complexity; the sequence is SSVQPPTPTSISTSSPDPKATQSSNSSVTTTSDSTTDRTSSSTSTVPTTSNS. Polar residues-rich tracts occupy residues 110–128 and 135–149; these read GQTV…TALP and NASS…STKL. Residues N135, N144, and N156 are each glycosylated (N-linked (GlcNAc...) asparagine). A compositionally biased stretch (low complexity) spans 150 to 161; sequence PSTPTTNSTASP. Composition is skewed to polar residues over residues 163-176, 186-228, and 235-253; these read QPVS…TTVQ, DNTT…QPTG, and SVPT…TPVV. N-linked (GlcNAc...) asparagine glycosylation is present at N187. A compositionally biased stretch (low complexity) spans 254 to 267; sequence SQGPSTPSSTWTSG. N287 is a glycosylation site (N-linked (GlcNAc...) asparagine). The chain crosses the membrane as a helical span at residues 387 to 407; sequence LPLIITIVCMASFLLLVAALY. Residues 408–485 are Cytoplasmic-facing; it reads GCCHQRISQR…DLDEEEDTHL (78 aa). T445 carries the phosphothreonine modification. At S464 the chain carries Phosphoserine. Position 483 is a phosphothreonine (T483).

It belongs to the podocalyxin family. As to quaternary structure, monomer; when associated with the membrane raft. Oligomer; when integrated in the apical membrane. Interacts with NHERF2. Interacts (via the C-terminal PDZ-binding motif DTHL) with NHERF1 (via the PDZ domains); the interaction take place early in the secretory pathway and is necessary for its apical membrane sorting. Found in a complex with EZR, PODXL and NHERF2. Associates with the actin cytoskeleton through complex formation with EZR and NHERF2. Interacts (via the C-terminal PDZ-binding motif DTHL) with NHERF1 (via the PDZ domains); interaction is not detected in glomerular epithelium cells. Interacts (via the C-terminal PDZ-binding motif DTHL) with NHERF2 (via the PDZ 1 domain); interaction is detected in glomerular epithelium cells. Interacts with EZR. In terms of processing, N- and O-linked glycosylated. Sialoglycoprotein. As to expression, glomerular epithelium cell (podocyte) (at protein level).

It is found in the apical cell membrane. The protein localises to the cell projection. The protein resides in the microvillus. It localises to the membrane raft. Its subcellular location is the lamellipodium. It is found in the filopodium. The protein localises to the ruffle. The protein resides in the membrane. Involved in the regulation of both adhesion and cell morphology and cancer progression. Functions as an anti-adhesive molecule that maintains an open filtration pathway between neighboring foot processes in the podocyte by charge repulsion. Acts as a pro-adhesive molecule, enhancing the adherence of cells to immobilized ligands, increasing the rate of migration and cell-cell contacts in an integrin-dependent manner. Induces the formation of apical actin-dependent microvilli. Involved in the formation of a preapical plasma membrane subdomain to set up initial epithelial polarization and the apical lumen formation during renal tubulogenesis. Plays a role in cancer development and aggressiveness by inducing cell migration and invasion through its interaction with the actin-binding protein EZR. Affects EZR-dependent signaling events, leading to increased activities of the MAPK and PI3K pathways in cancer cells. The sequence is that of Podocalyxin (Podxl) from Rattus norvegicus (Rat).